Here is a 353-residue protein sequence, read N- to C-terminus: Phosphate acyltransferase (353 aa).

This sequence belongs to the PlsX family. In terms of assembly, homodimer. Probably interacts with PlsY.

Its subcellular location is the cytoplasm. The catalysed reaction is a fatty acyl-[ACP] + phosphate = an acyl phosphate + holo-[ACP]. It functions in the pathway lipid metabolism; phospholipid metabolism. Catalyzes the reversible formation of acyl-phosphate (acyl-PO(4)) from acyl-[acyl-carrier-protein] (acyl-ACP). This enzyme utilizes acyl-ACP as fatty acyl donor, but not acyl-CoA. In Myxococcus xanthus (strain DK1622), this protein is Phosphate acyltransferase.